A 177-amino-acid polypeptide reads, in one-letter code: dCTP deaminase, dUMP-forming (177 aa).

DCTP is bound by residues 98 to 103 (RSSVGR), Asn110, 115 to 118 (DPGF), 123 to 125 (TLE), Gln144, 157 to 160 (YQGK), and Gln164. Glu125 acts as the Proton donor/acceptor in catalysis.

The protein belongs to the dCTP deaminase family. In terms of assembly, homotrimer. Mg(2+) serves as cofactor.

It catalyses the reaction dCTP + 2 H2O = dUMP + NH4(+) + diphosphate. The protein operates within pyrimidine metabolism; dUMP biosynthesis; dUMP from dCTP: step 1/1. Its activity is regulated as follows. Inhibited by dTTP. Bifunctional enzyme that catalyzes both the deamination of dCTP to dUTP and the hydrolysis of dUTP to dUMP without releasing the toxic dUTP intermediate. In Halalkalibacterium halodurans (strain ATCC BAA-125 / DSM 18197 / FERM 7344 / JCM 9153 / C-125) (Bacillus halodurans), this protein is dCTP deaminase, dUMP-forming.